A 314-amino-acid polypeptide reads, in one-letter code: Carbamate kinase (314 aa).

This sequence belongs to the carbamate kinase family. In terms of assembly, homodimer.

The protein resides in the cytoplasm. The enzyme catalyses hydrogencarbonate + NH4(+) + ATP = carbamoyl phosphate + ADP + H2O + H(+). In terms of biological role, carbamate kinase that plays a biosynthetic role in that it produces carbamoyl-phosphate. The protein is Carbamate kinase (cpkA) of Pyrococcus furiosus (strain ATCC 43587 / DSM 3638 / JCM 8422 / Vc1).